The sequence spans 190 residues: Imidazoleglycerol-phosphate dehydratase (190 aa).

Belongs to the imidazoleglycerol-phosphate dehydratase family.

It is found in the cytoplasm. The catalysed reaction is D-erythro-1-(imidazol-4-yl)glycerol 3-phosphate = 3-(imidazol-4-yl)-2-oxopropyl phosphate + H2O. It participates in amino-acid biosynthesis; L-histidine biosynthesis; L-histidine from 5-phospho-alpha-D-ribose 1-diphosphate: step 6/9. The protein is Imidazoleglycerol-phosphate dehydratase of Campylobacter fetus subsp. fetus (strain 82-40).